The sequence spans 175 residues: NADH-quinone oxidoreductase subunit B (175 aa).

Residues Cys-54, Cys-55, Cys-119, and Cys-149 each contribute to the [4Fe-4S] cluster site.

This sequence belongs to the complex I 20 kDa subunit family. As to quaternary structure, NDH-1 is composed of at least 14 different subunits, Nqo1 to Nqo14. The complex has a L-shaped structure, with the hydrophobic arm (subunits Nqo7, Nqo8, Nqo10 to Nqo14) embedded in the inner membrane and the hydrophilic peripheral arm (subunits Nqo1 to Nqo6, Nqo9) protruding into the bacterial cytoplasm. The hydrophilic domain contains all the redox centers. NADH-quinone oxidoreductase forms a supercomplex with ubiquinol-cytochrome c reductase complex (complex III or cytochrome b-c1 complex) and cytochrome c oxidase (complex IV), which stabilizes the NADH-quinone oxidoreductase complex. [4Fe-4S] cluster serves as cofactor.

It localises to the cell inner membrane. The enzyme catalyses a quinone + NADH + 5 H(+)(in) = a quinol + NAD(+) + 4 H(+)(out). Its function is as follows. NDH-1 shuttles electrons from NADH, via FMN and iron-sulfur (Fe-S) centers, to quinones in the respiratory chain. The immediate electron acceptor for the enzyme in this species is believed to be ubiquinone. Couples the redox reaction to proton translocation (for every two electrons transferred, four hydrogen ions are translocated across the cytoplasmic membrane), and thus conserves the redox energy in a proton gradient. This is NADH-quinone oxidoreductase subunit B from Paracoccus denitrificans (strain Pd 1222).